Consider the following 126-residue polypeptide: S-adenosylmethionine decarboxylase proenzyme (126 aa).

Residue Ser-63 is the Schiff-base intermediate with substrate; via pyruvic acid of the active site. Ser-63 carries the post-translational modification Pyruvic acid (Ser); by autocatalysis. The active-site Proton acceptor; for processing activity is His-68. The active-site Proton donor; for catalytic activity is Cys-83.

Belongs to the prokaryotic AdoMetDC family. Type 1 subfamily. Heterotetramer of two alpha and two beta chains arranged as a dimer of alpha/beta heterodimers. Pyruvate serves as cofactor. Is synthesized initially as an inactive proenzyme. Formation of the active enzyme involves a self-maturation process in which the active site pyruvoyl group is generated from an internal serine residue via an autocatalytic post-translational modification. Two non-identical subunits are generated from the proenzyme in this reaction, and the pyruvate is formed at the N-terminus of the alpha chain, which is derived from the carboxyl end of the proenzyme. The post-translation cleavage follows an unusual pathway, termed non-hydrolytic serinolysis, in which the side chain hydroxyl group of the serine supplies its oxygen atom to form the C-terminus of the beta chain, while the remainder of the serine residue undergoes an oxidative deamination to produce ammonia and the pyruvoyl group blocking the N-terminus of the alpha chain.

It carries out the reaction S-adenosyl-L-methionine + H(+) = S-adenosyl 3-(methylsulfanyl)propylamine + CO2. It functions in the pathway amine and polyamine biosynthesis; S-adenosylmethioninamine biosynthesis; S-adenosylmethioninamine from S-adenosyl-L-methionine: step 1/1. Catalyzes the decarboxylation of S-adenosylmethionine to S-adenosylmethioninamine (dcAdoMet), the propylamine donor required for the synthesis of the polyamines spermine and spermidine from the diamine putrescine. This chain is S-adenosylmethionine decarboxylase proenzyme, found in Clostridium tetani (strain Massachusetts / E88).